The sequence spans 555 residues: Formate--tetrahydrofolate ligase (555 aa).

Residue 65–72 (TPAGEGKS) participates in ATP binding.

It belongs to the formate--tetrahydrofolate ligase family.

It carries out the reaction (6S)-5,6,7,8-tetrahydrofolate + formate + ATP = (6R)-10-formyltetrahydrofolate + ADP + phosphate. The protein operates within one-carbon metabolism; tetrahydrofolate interconversion. In Staphylococcus aureus (strain NCTC 8325 / PS 47), this protein is Formate--tetrahydrofolate ligase.